We begin with the raw amino-acid sequence, 500 residues long: ATP synthase subunit alpha, sodium ion specific (500 aa).

169–176 is an ATP binding site; the sequence is GDRQTGKT.

It belongs to the ATPase alpha/beta chains family. As to quaternary structure, F-type ATPases have 2 components, CF(1) - the catalytic core - and CF(0) - the membrane proton channel. CF(1) has five subunits: alpha(3), beta(3), gamma(1), delta(1), epsilon(1). CF(0) has three main subunits: a, b and c.

The protein localises to the cell membrane. It carries out the reaction 4 Na(+)(in) + ATP + H2O = 4 Na(+)(out) + ADP + phosphate + H(+). Its function is as follows. Produces ATP from ADP in the presence of a sodium ion gradient across the membrane. The alpha chain is a regulatory subunit. The protein is ATP synthase subunit alpha, sodium ion specific of Propionigenium modestum.